A 218-amino-acid polypeptide reads, in one-letter code: MDVFDKVYSDDNNSYDQKTVSQRIEALFLNNLGKVVTRQQIIRAATDPKTGKQPENWHQRLSELRTDKGYTILSWRDMKVLAPQEYIMPHATRRPKAAKRVLPTKETWEQVLDRANYSCEWQEDGQHCGLVEGDIDPIGGGTVKLTPDHMTPHSIDPATDVNDPKMWQALCGRHQVMKKNYWDSNNGKINVIGILQSVNEKQKNDALEFLLNYYGLKR.

It carries out the reaction Endonucleolytic cleavage of DNA to give specific double-stranded fragments with terminal 5'-phosphates.. Its function is as follows. A P subtype restriction enzyme that recognizes the double-stranded sequence 5'-GGTACC-3' and cleaves after C-5. The protein is Type II restriction enzyme KpnI of Klebsiella pneumoniae.